Consider the following 550-residue polypeptide: Hydroxylamine reductase (550 aa).

The [2Fe-2S] cluster site is built by Cys3, Cys6, Cys18, and Cys25. Hybrid [4Fe-2O-2S] cluster-binding residues include His249, Glu273, Cys317, Cys405, Cys433, Cys458, Glu492, and Lys494. Cysteine persulfide is present on Cys405.

It belongs to the HCP family. The cofactor is [2Fe-2S] cluster. Requires hybrid [4Fe-2O-2S] cluster as cofactor.

It localises to the cytoplasm. The catalysed reaction is A + NH4(+) + H2O = hydroxylamine + AH2 + H(+). In terms of biological role, catalyzes the reduction of hydroxylamine to form NH(3) and H(2)O. The polypeptide is Hydroxylamine reductase (Pectobacterium atrosepticum (strain SCRI 1043 / ATCC BAA-672) (Erwinia carotovora subsp. atroseptica)).